A 352-amino-acid polypeptide reads, in one-letter code: Zinc finger CCCH domain-containing protein 42 (352 aa).

Residues 36–114 (AYVYVGGIPF…RTIKVDHCGA (79 aa)) form the RRM domain. 2 C3H1-type zinc fingers span residues 130-157 (REARGVCRAFQRGECTRGDSCKFSHDEK) and 180-207 (REGRGVCRAFQRGECTRGDSCKFSHDEK). The tract at residues 156 to 179 (EKRAANTGWGHEEDRSSKWDHDKN) is disordered. Composition is skewed to basic and acidic residues over residues 210-230 (ATTGWGHEEDRSSKWDQDKLN), 243-296 (GDFK…RSGR), and 304-352 (RHND…DRRR). The tract at residues 210 to 352 (ATTGWGHEED…DSLRREDRRR (143 aa)) is disordered. A coiled-coil region spans residues 319 to 348 (RAQDWEKRKAESRRDRNDREEKDRDSLRRE).

The polypeptide is Zinc finger CCCH domain-containing protein 42 (Arabidopsis thaliana (Mouse-ear cress)).